The sequence spans 145 residues: Transcription antitermination protein NusB (145 aa).

The protein belongs to the NusB family.

In terms of biological role, involved in transcription antitermination. Required for transcription of ribosomal RNA (rRNA) genes. Binds specifically to the boxA antiterminator sequence of the ribosomal RNA (rrn) operons. The chain is Transcription antitermination protein NusB from Ruminiclostridium cellulolyticum (strain ATCC 35319 / DSM 5812 / JCM 6584 / H10) (Clostridium cellulolyticum).